The chain runs to 180 residues: MIIYLHGFDSNSPGNHEKVLQLQFIDPDVRLISYSTRHPKHDMQHLLKEVDKMLQLNVDERPLICGVGLGGYWAERIGFLCDIRQVIFNPNLFPYENMEGKIDRPEEYADIATKCVTNFREKNRDRCLVILSRNDEALNSQRTSEELHHYYEIVWDEEQSHKFKNISPHLQRIKAFKTLG.

This sequence belongs to the UPF0227 family.

The sequence is that of UPF0227 protein YcfP from Escherichia coli O9:H4 (strain HS).